Consider the following 153-residue polypeptide: Aspartate carbamoyltransferase regulatory chain (153 aa).

Zn(2+) contacts are provided by Cys109, Cys114, Cys138, and Cys141.

The protein belongs to the PyrI family. In terms of assembly, contains catalytic and regulatory chains. The cofactor is Zn(2+).

Its function is as follows. Involved in allosteric regulation of aspartate carbamoyltransferase. The sequence is that of Aspartate carbamoyltransferase regulatory chain from Vibrio vulnificus (strain CMCP6).